The following is a 500-amino-acid chain: L-arabinose isomerase (500 aa).

Positions 306, 333, 350, and 450 each coordinate Mn(2+).

This sequence belongs to the arabinose isomerase family. In terms of assembly, homohexamer. Mn(2+) serves as cofactor.

The enzyme catalyses beta-L-arabinopyranose = L-ribulose. The protein operates within carbohydrate degradation; L-arabinose degradation via L-ribulose; D-xylulose 5-phosphate from L-arabinose (bacterial route): step 1/3. Its function is as follows. Catalyzes the conversion of L-arabinose to L-ribulose. The chain is L-arabinose isomerase from Yersinia enterocolitica serotype O:8 / biotype 1B (strain NCTC 13174 / 8081).